We begin with the raw amino-acid sequence, 357 residues long: Elongation factor Ts (357 aa).

The interval 82-85 (TDFV) is involved in Mg(2+) ion dislocation from EF-Tu.

The protein belongs to the EF-Ts family.

It is found in the cytoplasm. In terms of biological role, associates with the EF-Tu.GDP complex and induces the exchange of GDP to GTP. It remains bound to the aminoacyl-tRNA.EF-Tu.GTP complex up to the GTP hydrolysis stage on the ribosome. This is Elongation factor Ts from Campylobacter jejuni subsp. jejuni serotype O:6 (strain 81116 / NCTC 11828).